A 497-amino-acid polypeptide reads, in one-letter code: Aldehyde dehydrogenase (497 aa).

Residue 242–247 (GSTLVG) coordinates NAD(+). Glu265 functions as the Proton acceptor in the catalytic mechanism. Catalysis depends on Cys299, which acts as the Nucleophile.

It belongs to the aldehyde dehydrogenase family.

The enzyme catalyses an aldehyde + NAD(+) + H2O = a carboxylate + NADH + 2 H(+). It participates in alcohol metabolism; ethanol degradation; acetate from ethanol: step 2/2. The chain is Aldehyde dehydrogenase (aldA) from Aspergillus niger.